The primary structure comprises 201 residues: Holliday junction branch migration complex subunit RuvA (201 aa).

The domain I stretch occupies residues 1–64 (MIGRLRGTLA…EDAHLLYGFA (64 aa)). The domain II stretch occupies residues 65–143 (EKRERELFRE…AWENMPTIAP (79 aa)). The interval 144 to 152 (LVMEPRASA) is flexible linker. Residues 153-201 (TVSSAEADAVSALIALGFKPQEASRAVAAVPGEDLSSEEMIRQALKGMV) form a domain III region.

Belongs to the RuvA family. Homotetramer. Forms an RuvA(8)-RuvB(12)-Holliday junction (HJ) complex. HJ DNA is sandwiched between 2 RuvA tetramers; dsDNA enters through RuvA and exits via RuvB. An RuvB hexamer assembles on each DNA strand where it exits the tetramer. Each RuvB hexamer is contacted by two RuvA subunits (via domain III) on 2 adjacent RuvB subunits; this complex drives branch migration. In the full resolvosome a probable DNA-RuvA(4)-RuvB(12)-RuvC(2) complex forms which resolves the HJ.

The protein localises to the cytoplasm. The RuvA-RuvB-RuvC complex processes Holliday junction (HJ) DNA during genetic recombination and DNA repair, while the RuvA-RuvB complex plays an important role in the rescue of blocked DNA replication forks via replication fork reversal (RFR). RuvA specifically binds to HJ cruciform DNA, conferring on it an open structure. The RuvB hexamer acts as an ATP-dependent pump, pulling dsDNA into and through the RuvAB complex. HJ branch migration allows RuvC to scan DNA until it finds its consensus sequence, where it cleaves and resolves the cruciform DNA. The polypeptide is Holliday junction branch migration complex subunit RuvA (Pseudomonas aeruginosa (strain LESB58)).